Reading from the N-terminus, the 544-residue chain is Putative lipase ATG15 (544 aa).

Residues Met-1–Ala-45 lie on the Cytoplasmic side of the membrane. The chain crosses the membrane as a helical; Signal-anchor for type II membrane protein span at residues Val-46 to Phe-66. Over Ala-67–Ala-544 the chain is Lumenal. N-linked (GlcNAc...) asparagine glycans are attached at residues Asn-200, Asn-229, and Asn-234. The Charge relay system role is filled by Ser-362. The interval Pro-508–Thr-530 is disordered.

Belongs to the AB hydrolase superfamily. Lipase family. In terms of assembly, binds to both phosphatidylinositol (PI) and phosphatidylinositol 3,5-bisphosphate (PIP2).

It localises to the endosome. It is found in the multivesicular body membrane. The protein resides in the prevacuolar compartment membrane. It carries out the reaction a triacylglycerol + H2O = a diacylglycerol + a fatty acid + H(+). In terms of biological role, lipase which is essential for lysis of subvacuolar cytoplasm to vacuole targeted bodies and intravacuolar autophagic bodies. Involved in the lysis of intravacuolar multivesicular body (MVB) vesicles. The intravacuolar membrane disintegration by ATG15 is critical to life span extension. The protein is Putative lipase ATG15 (ATG15) of Eremothecium gossypii (strain ATCC 10895 / CBS 109.51 / FGSC 9923 / NRRL Y-1056) (Yeast).